The following is a 372-amino-acid chain: Glutamate 5-kinase (372 aa).

Lys-14 serves as a coordination point for ATP. 3 residues coordinate substrate: Ser-54, Asp-141, and Asn-153. ATP is bound by residues 173 to 174 (TD) and 215 to 221 (TGGMATK). Residues 280 to 358 (RGQLVIDAGA…DSIEEVLGYD (79 aa)) form the PUA domain.

It belongs to the glutamate 5-kinase family.

It is found in the cytoplasm. It carries out the reaction L-glutamate + ATP = L-glutamyl 5-phosphate + ADP. The protein operates within amino-acid biosynthesis; L-proline biosynthesis; L-glutamate 5-semialdehyde from L-glutamate: step 1/2. Functionally, catalyzes the transfer of a phosphate group to glutamate to form L-glutamate 5-phosphate. This chain is Glutamate 5-kinase, found in Shewanella pealeana (strain ATCC 700345 / ANG-SQ1).